Reading from the N-terminus, the 3065-residue chain is MAX gene-associated protein (3065 aa).

Glycyl lysine isopeptide (Lys-Gly) (interchain with G-Cter in SUMO2) cross-links involve residues Lys4 and Lys178. A DNA-binding region (T-box) is located at residues 84-260 (MWNEFYHRST…YNPFAKGFRD (177 aa)). Positions 259-277 (RDDGLNNKPQRDGKQKNSS) are enriched in basic and acidic residues. Positions 259–322 (RDDGLNNKPQ…GHETSGKGLE (64 aa)) are disordered. Over residues 278 to 289 (DQEGNNISSSSG) the composition is skewed to polar residues. Basic and acidic residues predominate over residues 309 to 322 (PLSRGHETSGKGLE). Residues Lys323, Lys329, Lys349, Lys432, Lys460, Lys465, and Lys482 each participate in a glycyl lysine isopeptide (Lys-Gly) (interchain with G-Cter in SUMO2) cross-link. Ser534 carries the phosphoserine modification. A Glycyl lysine isopeptide (Lys-Gly) (interchain with G-Cter in SUMO2) cross-link involves residue Lys570. The interval 604 to 653 (QNASPNVPGKRGRPRKLKLCKAGRPPKNTGKSLISTKNTPVSPGSTFPDV) is disordered. A Phosphoserine modification is found at Ser607. A Glycyl lysine isopeptide (Lys-Gly) (interchain with G-Cter in SUMO2) cross-link involves residue Lys613. Residues 613–624 (KRGRPRKLKLCK) are compositionally biased toward basic residues. The segment covering 632–648 (TGKSLISTKNTPVSPGS) has biased composition (polar residues). Ser645 is subject to Phosphoserine. Glycyl lysine isopeptide (Lys-Gly) (interchain with G-Cter in SUMO2) cross-links involve residues Lys654, Lys785, Lys791, Lys817, and Lys826. A Phosphoserine modification is found at Ser851. A disordered region spans residues 881-911 (STSYSLKPHSVPPVSRKAKSQNRQATFSGRT). Positions 901–911 (QNRQATFSGRT) are enriched in polar residues. Position 924 is a phosphoserine (Ser924). Residue Lys928 forms a Glycyl lysine isopeptide (Lys-Gly) (interchain with G-Cter in SUMO2) linkage. A disordered region spans residues 971–990 (RQAQQQQQQQQGSRPPGLSK). Residues 972-981 (QAQQQQQQQQ) are compositionally biased toward low complexity. Glycyl lysine isopeptide (Lys-Gly) (interchain with G-Cter in SUMO2) cross-links involve residues Lys990, Lys1091, Lys1140, Lys1162, Lys1199, and Lys1207. Residues 1111–1147 (YDTLGEEAREEEEGIREEEEQLKEKKKRKKLEYTICE) adopt a coiled-coil conformation. Ser1208 carries the phosphoserine modification. Disordered stretches follow at residues 1246–1332 (RKKE…PGGP) and 1380–1429 (RKSR…MEDI). Low complexity-rich tracts occupy residues 1253 to 1269 (QPSS…QQTS) and 1310 to 1322 (KSSC…SSTS). Phosphoserine occurs at positions 1430 and 1457. Residues Lys1461 and Lys1502 each participate in a glycyl lysine isopeptide (Lys-Gly) (interchain with G-Cter in SUMO2) cross-link. Disordered stretches follow at residues 1488 to 1517 (SRKP…PGKN), 1905 to 1927 (SPPE…YSSG), and 1967 to 2029 (QMKR…EDRG). 2 stretches are compositionally biased toward polar residues: residues 1495–1514 (LPST…TNRP) and 1911–1927 (SFAS…YSSG). The segment covering 1968-1994 (MKRESQNPDQKDETNSIKREQETKKVL) has biased composition (basic and acidic residues). Glycyl lysine isopeptide (Lys-Gly) (interchain with G-Cter in SUMO2) cross-links involve residues Lys1985 and Lys1992. A compositionally biased stretch (polar residues) spans 2008-2023 (IKQNSGAATSEETLND). Glycyl lysine isopeptide (Lys-Gly) (interchain with G-Cter in SUMO2) cross-links involve residues Lys2103, Lys2113, Lys2135, Lys2139, Lys2146, Lys2159, Lys2194, Lys2206, and Lys2238. The disordered stretch occupies residues 2258–2316 (RRAAKSSRGNGHFQGHLLLPGEQIQPKQEKKGGRSSADFTVLDLEEDDEDDNEKTDDSI). Residue Arg2265 is modified to Omega-N-methylarginine. Residue Lys2284 forms a Glycyl lysine isopeptide (Lys-Gly) (interchain with G-Cter in SUMO2) linkage. The span at 2300-2316 (DLEEDDEDDNEKTDDSI) shows a compositional bias: acidic residues. Residues Lys2378, Lys2413, Lys2457, and Lys2532 each participate in a glycyl lysine isopeptide (Lys-Gly) (interchain with G-Cter in SUMO2) cross-link. Residues 2423 to 2474 (YYRRTHTANERRRRGEMRDLFEKLKITLGLLHSSKVSKSLILTRAFSEIQGL) form the bHLH domain. Position 2541 is a phosphoserine (Ser2541). Lys2546 is covalently cross-linked (Glycyl lysine isopeptide (Lys-Gly) (interchain with G-Cter in SUMO2)). Residues 2576-2595 (KKDQATENTSPLNTPHTSAN) form a disordered region. A compositionally biased stretch (polar residues) spans 2581 to 2595 (TENTSPLNTPHTSAN). Residues Lys2629, Lys2679, Lys2698, and Lys2784 each participate in a glycyl lysine isopeptide (Lys-Gly) (interchain with G-Cter in SUMO2) cross-link. Positions 2668-2709 (GSKYPHEVPDSKPSDHLKDTVRNEDNSLEDKGRISSRGNRDG) are disordered. Over residues 2671–2709 (YPHEVPDSKPSDHLKDTVRNEDNSLEDKGRISSRGNRDG) the composition is skewed to basic and acidic residues. A coiled-coil region spans residues 2817–2841 (DDTDETLTSLLNEIAFLNQQLNDDS). Phosphoserine is present on residues Ser2910 and Ser2921. A disordered region spans residues 2944 to 2968 (AIDGGKNTSGLPAEPESVSSPPTLH). A Phosphoserine modification is found at Ser2978. Residue Lys3041 forms a Glycyl lysine isopeptide (Lys-Gly) (interchain with G-Cter in SUMO2) linkage.

As to quaternary structure, interacts with MAX. Requires dimerization with MAX for E-box binding. Component of some MLL1/MLL complex, at least composed of the core components KMT2A/MLL1, ASH2L, HCFC1/HCF1, WDR5 and RBBP5, as well as the facultative components BACC1, CHD8, E2F6, HSP70, INO80C, KANSL1, LAS1L, MAX, MCRS1, MGA, MYST1/MOF, PELP1, PHF20, PRP31, RING2, RUVB1/TIP49A, RUVB2/TIP49B, SENP3, TAF1, TAF4, TAF6, TAF7, TAF9 and TEX10. Interacts with ZMYND11. Highly expressed in germ cells and granulosa cells.

The protein resides in the nucleus. In terms of biological role, functions as a dual-specificity transcription factor, regulating the expression of both MAX-network and T-box family target genes. Functions as a repressor or an activator. Binds to 5'-AATTTCACACCTAGGTGTGAAATT-3' core sequence and seems to regulate MYC-MAX target genes. Suppresses transcriptional activation by MYC and inhibits MYC-dependent cell transformation. Function activated by heterodimerization with MAX. This heterodimerization serves the dual function of both generating an E-box-binding heterodimer and simultaneously blocking interaction of a corepressor. This is MAX gene-associated protein from Homo sapiens (Human).